Reading from the N-terminus, the 495-residue chain is MASGILVNIKEEVTCPICLELLTEPLSLHCGHSFCQACITANHKKSMLYKEGERSCPVCRISYQPENIRPNRHVANIVEKLREVKLSPEEGQKVDHCARHGEKLLLFCQEDRKVICWLCERSQEHRGHHTFLMEEVAQEYHVKLQTALEMLRQKQQEAEKLEADIREEKASWKIQIDCDKTNVLADFEQLREILDWEESNELQNLEKEEEDILKSLTKSETEMVQQTQYMRELISDLEHRLQGSMMELLQGVDGIIKRIENMTLKKPKTFPKNQRRVFRAPDLKGILDMFRELTDVRRYWVDVTLAPNNISHAVIAEDKRQVSSPNPQIMCRARGTLFQSLKNFIYCTGVLGSQSITSGKHYWEVDVSKKSAWILGVCAGFQPDAMYNIEQNENYQPKYGYWVIGLQEGVKYNVFQDGSSHTPFAPFIVPLSVIICPDRVGVFVDYEACTVSFFNITNHGFLIYKFSQCSFSKPVFPYLNPRKCTVPMTLCSPSS.

Ala-2 bears the N-acetylalanine mark. The RING-type zinc-finger motif lies at 15–60 (CPICLELLTEPLSLHCGHSFCQACITANHKKSMLYKEGERSCPVCR). Ser-87 is subject to Phosphoserine. Residues 92 to 133 (QKVDHCARHGEKLLLFCQEDRKVICWLCERSQEHRGHHTFLM) form a B box-type zinc finger. Zn(2+) is bound by residues Cys-97, His-100, Cys-119, and His-125. A coiled-coil region spans residues 137–225 (AQEYHVKLQT…LTKSETEMVQ (89 aa)). A required for interaction with GABARAP and for autophagy region spans residues 187 to 200 (FEQLREILDWEESN). Residues 283–495 (LKGILDMFRE…VPMTLCSPSS (213 aa)) enclose the B30.2/SPRY domain.

Belongs to the TRIM/RBCC family. Can form homodimers and homotrimers. In addition to lower-order dimerization, also exhibits a higher-order multimerization and both low- and high-order multimerizations are essential for its restriction activity. Interacts with BTBD1 and BTBD2. Interacts with PSMC4, PSMC5, PSMD7 and HSPA8/HSC70. Interacts (via B30.2/SPRY domain) with HSPA1A/B. Interacts with PSMC2, MAP3K7/TAK1, TAB2 and TAB3. Interacts with SQSTM1. Interacts with TRIM6 and TRIM34. Interacts with ULK1 (phosphorylated form), GABARAP, GABARAPL1, GABARAPL2, MAP1LC3A, MAP1LC3C and BECN1. Post-translationally, degraded in a proteasome-independent fashion in the absence of viral infection but in a proteasome-dependent fashion following exposure to restriction sensitive virus. Autoubiquitinated in a RING finger- and UBE2D2-dependent manner. Monoubiquitinated by TRIM21. Deubiquitinated by Yersinia YopJ. Ubiquitination may not lead to proteasomal degradation.

The protein localises to the cytoplasm. It is found in the nucleus. It carries out the reaction S-ubiquitinyl-[E2 ubiquitin-conjugating enzyme]-L-cysteine + [acceptor protein]-L-lysine = [E2 ubiquitin-conjugating enzyme]-L-cysteine + N(6)-ubiquitinyl-[acceptor protein]-L-lysine.. It functions in the pathway protein modification; protein ubiquitination. In terms of biological role, capsid-specific restriction factor that prevents infection from non-host-adapted retroviruses. Blocks viral replication early in the life cycle, after viral entry but before reverse transcription. In addition to acting as a capsid-specific restriction factor, also acts as a pattern recognition receptor that activates innate immune signaling in response to the retroviral capsid lattice. Binding to the viral capsid triggers its E3 ubiquitin ligase activity, and in concert with the heterodimeric ubiquitin conjugating enzyme complex UBE2V1-UBE2N (also known as UBC13-UEV1A complex) generates 'Lys-63'-linked polyubiquitin chains, which in turn are catalysts in the autophosphorylation of the MAP3K7/TAK1 complex (includes TAK1, TAB2, and TAB3). Activation of the MAP3K7/TAK1 complex by autophosphorylation results in the induction and expression of NF-kappa-B and MAPK-responsive inflammatory genes, thereby leading to an innate immune response in the infected cell. Plays a role in regulating autophagy through activation of autophagy regulator BECN1 by causing its dissociation from its inhibitors BCL2 and TAB2. This is Tripartite motif-containing protein 5 (TRIM5) from Pygathrix nemaeus (Red-shanked douc langur).